Consider the following 214-residue polypeptide: Serine protease inhibitor 2.1 (214 aa).

Belongs to the serpin family.

This is Serine protease inhibitor 2.1 from Rattus norvegicus (Rat).